We begin with the raw amino-acid sequence, 103 residues long: Co-chaperonin GroES (103 aa).

It belongs to the GroES chaperonin family. As to quaternary structure, heptamer of 7 subunits arranged in a ring. Interacts with the chaperonin GroEL.

It localises to the cytoplasm. In terms of biological role, together with the chaperonin GroEL, plays an essential role in assisting protein folding. The GroEL-GroES system forms a nano-cage that allows encapsulation of the non-native substrate proteins and provides a physical environment optimized to promote and accelerate protein folding. GroES binds to the apical surface of the GroEL ring, thereby capping the opening of the GroEL channel. This chain is Co-chaperonin GroES, found in Synechococcus sp. (strain WH7803).